Reading from the N-terminus, the 369-residue chain is GDSL esterase/lipase At5g41890 (369 aa).

The active-site Nucleophile is Ser32. Active-site residues include Asp334 and His337.

It belongs to the 'GDSL' lipolytic enzyme family.

This is GDSL esterase/lipase At5g41890 from Arabidopsis thaliana (Mouse-ear cress).